Consider the following 354-residue polypeptide: Galectin-9 (354 aa).

Galectin domains follow at residues 17-147 and 226-354; these read FTGI…INFQ and FFTS…HVQT. A beta-D-galactoside-binding positions include asparagine 47, histidine 60, arginine 64, asparagine 74, 81-87, histidine 266, arginine 270, threonine 280, and 286-292; these read WGPEERK and WGPEERS.

The isoform Long is expressed exclusively in the small intestine.

It is found in the cytoplasm. It localises to the nucleus. The protein localises to the secreted. Its function is as follows. Binds galactosides. Has high affinity for the Forssman pentasaccharide. Ligand for HAVCR2/TIM3. Binding to HAVCR2 induces T-helper type 1 lymphocyte (Th1) death. Also stimulates bactericidal activity in infected macrophages by causing macrophage activation and IL1B secretion which restricts intracellular bacterial growth. Ligand for P4HB; the interaction retains P4HB at the cell surface of Th2 T helper cells, increasing disulfide reductase activity at the plasma membrane, altering the plasma membrane redox state and enhancing cell migration. Ligand for CD44; the interaction enhances binding of SMAD3 to the FOXP3 promoter, leading to up-regulation of FOXP3 expression and increased induced regulatory T (iTreg) cell stability and suppressive function. Promotes ability of mesenchymal stromal cells to suppress T-cell proliferation. Expands regulatory T-cells and induces cytotoxic T-cell apoptosis following virus infection. Activates ERK1/2 phosphorylation inducing cytokine (IL-6, IL-8, IL-12) and chemokine (CCL2) production in mast and dendritic cells. Inhibits degranulation and induces apoptosis of mast cells. Induces maturation and migration of dendritic cells. Inhibits natural killer (NK) cell function. Can transform NK cell phenotype from peripheral to decidual during pregnancy. Astrocyte derived galectin-9 enhances microglial TNF production. May play a role in thymocyte-epithelial interactions relevant to the biology of the thymus. May provide the molecular basis for urate flux across cell membranes, allowing urate that is formed during purine metabolism to efflux from cells and serving as an electrogenic transporter that plays an important role in renal and gastrointestinal urate excretion. Highly selective to the anion urate. In Rattus norvegicus (Rat), this protein is Galectin-9 (Lgals9).